The chain runs to 318 residues: NADH-ubiquinone oxidoreductase chain 1 (318 aa).

The next 8 membrane-spanning stretches (helical) occupy residues Phe2 to Leu22, Thr76 to Ile96, Leu102 to Ala122, Leu146 to Ile166, Tyr171 to Ala191, Ala217 to Leu237, Glu253 to Val273, and Leu294 to Ile314.

The protein belongs to the complex I subunit 1 family. Core subunit of respiratory chain NADH dehydrogenase (Complex I) which is composed of 45 different subunits.

It localises to the mitochondrion inner membrane. The catalysed reaction is a ubiquinone + NADH + 5 H(+)(in) = a ubiquinol + NAD(+) + 4 H(+)(out). Core subunit of the mitochondrial membrane respiratory chain NADH dehydrogenase (Complex I) which catalyzes electron transfer from NADH through the respiratory chain, using ubiquinone as an electron acceptor. Essential for the catalytic activity and assembly of complex I. The polypeptide is NADH-ubiquinone oxidoreductase chain 1 (MT-ND1) (Lemur catta (Ring-tailed lemur)).